A 414-amino-acid chain; its full sequence is uncharacterized protein (414 aa).

The first 18 residues, 1 to 18 (MLKRLMLASAILPVVSFA), serve as a signal peptide directing secretion.

This is an uncharacterized protein from Aquifex aeolicus (strain VF5).